The chain runs to 428 residues: AA14 family lytic polysaccharide monooxygenase A (428 aa).

Positions 1–21 are cleaved as a signal peptide; the sequence is MLRSLPASLALVAAFASKASA. 2 N-linked (GlcNAc...) asparagine glycosylation sites follow: asparagine 34 and asparagine 52. Cystine bridges form between cysteine 88-cysteine 112, cysteine 131-cysteine 158, cysteine 174-cysteine 179, cysteine 181-cysteine 203, and cysteine 223-cysteine 239. Asparagine 155 carries an N-linked (GlcNAc...) asparagine glycan. Disordered stretches follow at residues 216 to 239 and 292 to 428; these read KPAVPRRCGADPDHGKPDPTPGNC and SSGT…HNAH. Basic and acidic residues predominate over residues 223–232; the sequence is CGADPDHGKP. Residue asparagine 238 is glycosylated (N-linked (GlcNAc...) asparagine). Over residues 292–379 the composition is skewed to low complexity; it reads SSGTGSSPTS…SVATEASSSP (88 aa). Residues 380-402 show a composition bias toward polar residues; sequence IASTTVDEAVVSSSTVGSINPTR. Positions 414 to 428 are enriched in basic residues; that stretch reads QKKKRKHARHLHNAH.

The cofactor is Cu(2+).

It localises to the secreted. In terms of biological role, lytic polysaccharide monooxygenase (LPMO) showing oxidase and peroxidase activities that are common for LPMOs. Catalysis by LPMOs requires the reduction of the active-site copper from Cu(II) to Cu(I) by a reducing agent and H(2)O(2) or O(2) as a cosubstrate. Shows no activity on cellulose-associated xylan or any other tested polysaccharide substrate, meaning that the substrate rremains unknown. The sequence is that of AA14 family lytic polysaccharide monooxygenase A from Trametes coccinea (strain BRFM310) (Pycnoporus coccineus).